The following is a 42-amino-acid chain: Profilin (42 aa).

Belongs to the profilin family. Occurs in many kinds of cells as a complex with monomeric actin in a 1:1 ratio.

The protein localises to the cytoplasm. Its subcellular location is the cytoskeleton. In terms of biological role, binds to actin and affects the structure of the cytoskeleton. At high concentrations, profilin prevents the polymerization of actin, whereas it enhances it at low concentrations. This is Profilin from Plantago lanceolata (English plantain).